Here is a 188-residue protein sequence, read N- to C-terminus: Elongation factor P (188 aa).

The protein belongs to the elongation factor P family.

It localises to the cytoplasm. It participates in protein biosynthesis; polypeptide chain elongation. Involved in peptide bond synthesis. Stimulates efficient translation and peptide-bond synthesis on native or reconstituted 70S ribosomes in vitro. Probably functions indirectly by altering the affinity of the ribosome for aminoacyl-tRNA, thus increasing their reactivity as acceptors for peptidyl transferase. The chain is Elongation factor P from Aeromonas salmonicida (strain A449).